We begin with the raw amino-acid sequence, 377 residues long: Lipoyl synthase, mitochondrial (377 aa).

Residues Cys-103, Cys-108, Cys-114, Cys-134, Cys-138, Cys-141, and Ser-349 each coordinate [4Fe-4S] cluster. The region spanning 119-338 (EHGTQTATIM…EERGNELGFL (220 aa)) is the Radical SAM core domain.

The protein belongs to the radical SAM superfamily. Lipoyl synthase family. It depends on [4Fe-4S] cluster as a cofactor.

It is found in the mitochondrion. The catalysed reaction is [[Fe-S] cluster scaffold protein carrying a second [4Fe-4S](2+) cluster] + N(6)-octanoyl-L-lysyl-[protein] + 2 oxidized [2Fe-2S]-[ferredoxin] + 2 S-adenosyl-L-methionine + 4 H(+) = [[Fe-S] cluster scaffold protein] + N(6)-[(R)-dihydrolipoyl]-L-lysyl-[protein] + 4 Fe(3+) + 2 hydrogen sulfide + 2 5'-deoxyadenosine + 2 L-methionine + 2 reduced [2Fe-2S]-[ferredoxin]. It functions in the pathway protein modification; protein lipoylation via endogenous pathway; protein N(6)-(lipoyl)lysine from octanoyl-[acyl-carrier-protein]: step 2/2. Functionally, catalyzes the radical-mediated insertion of two sulfur atoms into the C-6 and C-8 positions of the octanoyl moiety bound to the lipoyl domains of lipoate-dependent enzymes, thereby converting the octanoylated domains into lipoylated derivatives. The polypeptide is Lipoyl synthase, mitochondrial (Drosophila melanogaster (Fruit fly)).